Consider the following 212-residue polypeptide: Ras-related protein Rab-15 (212 aa).

10 residues coordinate GTP: Ser17, Gly18, Val19, Gly20, Lys21, Thr22, Cys23, Ser35, Ser39, and Thr40. Thr22 is a binding site for Mg(2+). Short sequence motifs (switch) lie at residues 31–45 (NEFH…GVDF) and 63–80 (DTAG…YYRR). Thr40 and Asp63 together coordinate Mg(2+). 6 residues coordinate GTP: Gly66, Asn121, Lys122, Asp124, Ser151, and Ala152. The segment at 192–212 (ELEEDEGKPEGPANSSKTCWC) is disordered. Residues Cys210 and Cys212 are each lipidated (S-geranylgeranyl cysteine). Position 212 is a cysteine methyl ester (Cys212).

This sequence belongs to the small GTPase superfamily. Rab family. As to quaternary structure, the GTP bound form of RAB15 interacts with REP15. Interacts (GTP-bound form) with MICAL1, MICAL3, MICALCL, EHBP1 and EHBP1L1. It depends on Mg(2+) as a cofactor.

Its subcellular location is the cell membrane. It carries out the reaction GTP + H2O = GDP + phosphate + H(+). Its activity is regulated as follows. Regulated by guanine nucleotide exchange factors (GEFs) which promote the exchange of bound GDP for free GTP. Regulated by GTPase activating proteins (GAPs) which increase the GTP hydrolysis activity. Inhibited by GDP dissociation inhibitors (GDIs). Functionally, the small GTPases Rab are key regulators of intracellular membrane trafficking, from the formation of transport vesicles to their fusion with membranes. Rabs cycle between an inactive GDP-bound form and an active GTP-bound form that is able to recruit to membranes different sets of downstream effectors directly responsible for vesicle formation, movement, tethering and fusion. RAB15 may act in concert with RAB3A in regulating aspects of synaptic vesicle membrane flow within the nerve terminal. The protein is Ras-related protein Rab-15 of Mus musculus (Mouse).